Reading from the N-terminus, the 65-residue chain is Photosystem II reaction center protein J (65 aa).

A helical transmembrane segment spans residues Leu-35–Tyr-55.

This sequence belongs to the PsbJ family. In terms of assembly, PSII is composed of 1 copy each of membrane proteins PsbA, PsbB, PsbC, PsbD, PsbE, PsbF, PsbH, PsbI, PsbJ, PsbK, PsbL, PsbM, PsbT, PsbX, PsbY, Psb30/Ycf12, peripheral proteins PsbO, CyanoQ (PsbQ), PsbU, PsbV and a large number of cofactors. It forms dimeric complexes.

It localises to the cellular thylakoid membrane. Its function is as follows. One of the components of the core complex of photosystem II (PSII). PSII is a light-driven water:plastoquinone oxidoreductase that uses light energy to abstract electrons from H(2)O, generating O(2) and a proton gradient subsequently used for ATP formation. It consists of a core antenna complex that captures photons, and an electron transfer chain that converts photonic excitation into a charge separation. The chain is Photosystem II reaction center protein J from Prochlorococcus marinus (strain NATL2A).